We begin with the raw amino-acid sequence, 403 residues long: 1-deoxy-D-xylulose 5-phosphate reductoisomerase (403 aa).

Residues Thr18, Gly19, Ser20, Ile21, Gln46, and Asn132 each contribute to the NADPH site. A 1-deoxy-D-xylulose 5-phosphate-binding site is contributed by Lys133. Glu134 is a binding site for NADPH. Residue Asp158 participates in Mn(2+) binding. Residues Ser159, Glu160, Ser189, and His212 each contribute to the 1-deoxy-D-xylulose 5-phosphate site. Mn(2+) is bound at residue Glu160. Position 218 (Gly218) interacts with NADPH. Ser225, Asn230, Lys231, and Glu234 together coordinate 1-deoxy-D-xylulose 5-phosphate. Mn(2+) is bound at residue Glu234.

The protein belongs to the DXR family. Mg(2+) is required as a cofactor. Mn(2+) serves as cofactor.

The enzyme catalyses 2-C-methyl-D-erythritol 4-phosphate + NADP(+) = 1-deoxy-D-xylulose 5-phosphate + NADPH + H(+). It participates in isoprenoid biosynthesis; isopentenyl diphosphate biosynthesis via DXP pathway; isopentenyl diphosphate from 1-deoxy-D-xylulose 5-phosphate: step 1/6. Functionally, catalyzes the NADPH-dependent rearrangement and reduction of 1-deoxy-D-xylulose-5-phosphate (DXP) to 2-C-methyl-D-erythritol 4-phosphate (MEP). This Aromatoleum aromaticum (strain DSM 19018 / LMG 30748 / EbN1) (Azoarcus sp. (strain EbN1)) protein is 1-deoxy-D-xylulose 5-phosphate reductoisomerase.